We begin with the raw amino-acid sequence, 123 residues long: Small ribosomal subunit protein uS12 (123 aa).

The interval 1–32 (MPTINQLIRKPREAQKARDKAPALQSSPQKRG) is disordered. A compositionally biased stretch (basic and acidic residues) spans 10 to 21 (KPREAQKARDKA). At D89 the chain carries 3-methylthioaspartic acid.

It belongs to the universal ribosomal protein uS12 family. As to quaternary structure, part of the 30S ribosomal subunit. Contacts proteins S8 and S17. May interact with IF1 in the 30S initiation complex.

With S4 and S5 plays an important role in translational accuracy. Functionally, interacts with and stabilizes bases of the 16S rRNA that are involved in tRNA selection in the A site and with the mRNA backbone. Located at the interface of the 30S and 50S subunits, it traverses the body of the 30S subunit contacting proteins on the other side and probably holding the rRNA structure together. The combined cluster of proteins S8, S12 and S17 appears to hold together the shoulder and platform of the 30S subunit. The protein is Small ribosomal subunit protein uS12 of Azorhizobium caulinodans (strain ATCC 43989 / DSM 5975 / JCM 20966 / LMG 6465 / NBRC 14845 / NCIMB 13405 / ORS 571).